We begin with the raw amino-acid sequence, 248 residues long: Caffeoyl-CoA O-methyltransferase 3 (248 aa).

Residue Lys22 participates in substrate binding. Residues Thr64, Glu86, 88-89, Ser94, Asp112, and Ala141 contribute to the S-adenosyl-L-methionine site; that span reads GV. Asp164 serves as a coordination point for substrate. Asp164 is a binding site for a divalent metal cation. Asp166 provides a ligand contact to S-adenosyl-L-methionine. Positions 190 and 191 each coordinate a divalent metal cation. A substrate-binding site is contributed by Asn195.

This sequence belongs to the class I-like SAM-binding methyltransferase superfamily. Cation-dependent O-methyltransferase family. CCoAMT subfamily. It depends on a divalent metal cation as a cofactor. As to expression, mostly expressed in petal limbs and tubes, and, at low levels, in stems, roots and leaves.

It localises to the cytoplasm. Its subcellular location is the cytosol. It carries out the reaction (E)-caffeoyl-CoA + S-adenosyl-L-methionine = (E)-feruloyl-CoA + S-adenosyl-L-homocysteine + H(+). The catalysed reaction is (E)-5-hydroxyferuloyl-CoA + S-adenosyl-L-methionine = (E)-sinapoyl-CoA + S-adenosyl-L-homocysteine + H(+). It participates in aromatic compound metabolism; phenylpropanoid biosynthesis. Functionally, involved in the production of floral volatile phenylpropanoids in flowers of fragrant cultivars (e.g. cv. Mitchell and cv. V26) from cinnamic acid, a common precursor with the anthocyanin biosynthesis pathway involved in flower pigmentation. Methylates caffeoyl-CoA to feruloyl-CoA, also able to methylate 5-hydroxyferuloyl-CoA. In Petunia hybrida (Petunia), this protein is Caffeoyl-CoA O-methyltransferase 3.